The sequence spans 455 residues: Ribulose bisphosphate carboxylase large chain (455 aa).

Lysine 5 carries the post-translational modification N6,N6,N6-trimethyllysine. Residues asparagine 114 and threonine 164 each coordinate substrate. The Proton acceptor role is filled by lysine 166. Substrate is bound at residue lysine 168. 3 residues coordinate Mg(2+): lysine 192, aspartate 194, and glutamate 195. Lysine 192 is modified (N6-carboxylysine). Histidine 285 functions as the Proton acceptor in the catalytic mechanism. 3 residues coordinate substrate: arginine 286, histidine 318, and serine 370.

Belongs to the RuBisCO large chain family. Type I subfamily. In terms of assembly, heterohexadecamer of 8 large chains and 8 small chains. Mg(2+) serves as cofactor.

It is found in the plastid. The protein resides in the chloroplast. The enzyme catalyses 2 (2R)-3-phosphoglycerate + 2 H(+) = D-ribulose 1,5-bisphosphate + CO2 + H2O. It catalyses the reaction D-ribulose 1,5-bisphosphate + O2 = 2-phosphoglycolate + (2R)-3-phosphoglycerate + 2 H(+). Functionally, ruBisCO catalyzes two reactions: the carboxylation of D-ribulose 1,5-bisphosphate, the primary event in carbon dioxide fixation, as well as the oxidative fragmentation of the pentose substrate in the photorespiration process. Both reactions occur simultaneously and in competition at the same active site. This is Ribulose bisphosphate carboxylase large chain from Tamarindus indica (Tamarind).